The sequence spans 104 residues: uncharacterized protein (104 aa).

Positions 24–69 (VIKQIIEKYNDKVKELDTLKNQYQNLQQDYENLKQQVSLQRQTMIS) form a coiled coil.

This is an uncharacterized protein from Acanthamoeba polyphaga mimivirus (APMV).